A 373-amino-acid chain; its full sequence is D-alanine--D-alanine ligase A (373 aa).

The ATP-grasp domain maps to 146-355 (KRLAEFAGIP…YGELLSRLVD (210 aa)). 179–234 (VEGLSLPVFVKPCNMGSSVGIHKVKTQDALEAALDDAFRYDVKVLVQQGIDAREIE) contacts ATP. Positions 308, 322, and 324 each coordinate Mg(2+).

Belongs to the D-alanine--D-alanine ligase family. Mg(2+) is required as a cofactor. It depends on Mn(2+) as a cofactor.

The protein resides in the cytoplasm. The enzyme catalyses 2 D-alanine + ATP = D-alanyl-D-alanine + ADP + phosphate + H(+). It functions in the pathway cell wall biogenesis; peptidoglycan biosynthesis. In terms of biological role, cell wall formation. This is D-alanine--D-alanine ligase A from Bradyrhizobium diazoefficiens (strain JCM 10833 / BCRC 13528 / IAM 13628 / NBRC 14792 / USDA 110).